The primary structure comprises 200 residues: Putative hydrolase MhqD (200 aa).

Residues Ser100, Asp150, and His181 each act as charge relay system in the active site.

The protein belongs to the AB hydrolase superfamily. AB hydrolase 2 family.

It is found in the cytoplasm. Its function is as follows. Putative hydrolase that may contribute to the degradation of aromatic compounds. The polypeptide is Putative hydrolase MhqD (mhqD) (Bacillus subtilis (strain 168)).